Reading from the N-terminus, the 330-residue chain is Transcription factor TGA6 (330 aa).

The span at 1 to 13 (MADTSSRTDVSTD) shows a compositional bias: polar residues. The segment at 1–45 (MADTSSRTDVSTDGDTDHRDLGSDRGHMHAAASDSSDRSKDKLDQ) is disordered. 2 stretches are compositionally biased toward basic and acidic residues: residues 15–27 (DTDH…DRGH) and 35–45 (SSDRSKDKLDQ). Residues 44–107 (DQKTLRRLAQ…SSGDQAHSTG (64 aa)) enclose the bZIP domain. 2 coiled-coil regions span residues 45 to 142 (QKTL…HAGD) and 217 to 233 (INSL…ALSQ). Residues 46-66 (KTLRRLAQNREAARKSRLRKK) form a basic motif region. Residues 72–86 (LENSRLKLTQLEQEL) are leucine-zipper. Positions 111 to 327 (ALAFDAEHSR…RALSSLWLAR (217 aa)) constitute a DOG1 domain.

The protein belongs to the bZIP family. In terms of assembly, binds DNA as a dimer. Interacts with NPR1, NPR3 and NPR4. Interacts with GRXC9/GRX480. Expressed predominantly in roots and flowers.

The protein localises to the nucleus. Functionally, transcriptional activator that binds specifically to the DNA sequence 5'-TGACG-3'. Recognizes ocs elements like the as-1 motif of the cauliflower mosaic virus 35S promoter. Binding to the as-1-like cis elements mediate auxin- and salicylic acid-inducible transcription. May be involved in the induction of the systemic acquired resistance (SAR) via its interaction with NPR1. Could also bind to the Hex-motif (5'-TGACGTGG-3') another cis-acting element found in plant histone promoters. The sequence is that of Transcription factor TGA6 (TGA6) from Arabidopsis thaliana (Mouse-ear cress).